Reading from the N-terminus, the 458-residue chain is UDP-N-acetylmuramoylalanine--D-glutamate ligase (458 aa).

Residue glycine 124 to threonine 130 coordinates ATP.

It belongs to the MurCDEF family.

It localises to the cytoplasm. It carries out the reaction UDP-N-acetyl-alpha-D-muramoyl-L-alanine + D-glutamate + ATP = UDP-N-acetyl-alpha-D-muramoyl-L-alanyl-D-glutamate + ADP + phosphate + H(+). It functions in the pathway cell wall biogenesis; peptidoglycan biosynthesis. In terms of biological role, cell wall formation. Catalyzes the addition of glutamate to the nucleotide precursor UDP-N-acetylmuramoyl-L-alanine (UMA). This is UDP-N-acetylmuramoylalanine--D-glutamate ligase from Clostridium botulinum (strain Loch Maree / Type A3).